The following is a 213-amino-acid chain: Gas vesicle protein F1 (213 aa).

Belongs to the gas vesicle GvpF/GvpL family. As to quaternary structure, binds GvpA1 in early growth stages; is the only one of GvpF1 to GvpM1 that interacts with GvpA1 in H.volcanii experiments. GvpF to GvpM interact with each other in vitro, and may form multi-subunit complex(es). Interacts with GvpC1 and GvpO1.

The protein localises to the gas vesicle. It localises to the cytoplasm. Might be involved in preventing aggregation of GvpA1. Proteins GvpF to GvpM might be involved in nucleating gas vesicle formation. A minor component of the gas vesicle, also found in soluble extracts. Gas vesicles are hollow, gas filled proteinaceous nanostructures found in several microbial planktonic microorganisms. They allow positioning of halobacteria at the optimal depth for growth in the poorly aerated, shallow brine pools of their habitat. Functionally, expression of a 9.5 kb p-vac DNA fragment containing 2 divergently transcribed regions (gvpD-gvpE-gvpF-gvpG-gvpH-gvpI-gvpJ-gvpK-gvpL-gvpM and gvpA-gvpC-gvpN-gvpO) allows H.volcanii to produce gas vesicles. A minimal gas vesicle can be made in H.volcanii by gvpA1-gvpO1 plus gvpF1-gvpG1-gvpJ1-gvpK1-gvpL1-gvpM1; lack of enough GvpJ1 prevents formation. The same region restores gas vesicle production in H.halobium without the p-vac locus. The protein is Gas vesicle protein F1 (gvpF11) of Halobacterium salinarum (strain ATCC 700922 / JCM 11081 / NRC-1) (Halobacterium halobium).